The sequence spans 313 residues: Ester hydrolase C11orf54 homolog (313 aa).

The Zn(2+) site is built by His-264, His-266, and His-276.

Monomer. Zn(2+) serves as cofactor.

The protein localises to the nucleus. The protein resides in the cytoplasm. Functionally, exhibits ester hydrolase activity on the substrate p-nitrophenyl acetate, in vitro. May regulate DNA damage and repair by regulating HIF1A degradation via chaperone-mediated autophagy (CMA). The sequence is that of Ester hydrolase C11orf54 homolog from Xenopus tropicalis (Western clawed frog).